Consider the following 210-residue polypeptide: Large ribosomal subunit protein uL3 (210 aa).

This sequence belongs to the universal ribosomal protein uL3 family. As to quaternary structure, part of the 50S ribosomal subunit. Forms a cluster with proteins L14 and L19.

One of the primary rRNA binding proteins, it binds directly near the 3'-end of the 23S rRNA, where it nucleates assembly of the 50S subunit. This Solibacter usitatus (strain Ellin6076) protein is Large ribosomal subunit protein uL3.